The sequence spans 209 residues: Thiamine-phosphate synthase (209 aa).

4-amino-2-methyl-5-(diphosphooxymethyl)pyrimidine is bound by residues 39–43 and Asn71; that span reads QLREK. Positions 72 and 91 each coordinate Mg(2+). Ser110 contacts 4-amino-2-methyl-5-(diphosphooxymethyl)pyrimidine. 136-138 serves as a coordination point for 2-[(2R,5Z)-2-carboxy-4-methylthiazol-5(2H)-ylidene]ethyl phosphate; it reads TGT. Lys139 provides a ligand contact to 4-amino-2-methyl-5-(diphosphooxymethyl)pyrimidine. 2-[(2R,5Z)-2-carboxy-4-methylthiazol-5(2H)-ylidene]ethyl phosphate-binding positions include Gly166 and 186–187; that span reads VS.

This sequence belongs to the thiamine-phosphate synthase family. It depends on Mg(2+) as a cofactor.

It catalyses the reaction 2-[(2R,5Z)-2-carboxy-4-methylthiazol-5(2H)-ylidene]ethyl phosphate + 4-amino-2-methyl-5-(diphosphooxymethyl)pyrimidine + 2 H(+) = thiamine phosphate + CO2 + diphosphate. The catalysed reaction is 2-(2-carboxy-4-methylthiazol-5-yl)ethyl phosphate + 4-amino-2-methyl-5-(diphosphooxymethyl)pyrimidine + 2 H(+) = thiamine phosphate + CO2 + diphosphate. The enzyme catalyses 4-methyl-5-(2-phosphooxyethyl)-thiazole + 4-amino-2-methyl-5-(diphosphooxymethyl)pyrimidine + H(+) = thiamine phosphate + diphosphate. It participates in cofactor biosynthesis; thiamine diphosphate biosynthesis; thiamine phosphate from 4-amino-2-methyl-5-diphosphomethylpyrimidine and 4-methyl-5-(2-phosphoethyl)-thiazole: step 1/1. Functionally, condenses 4-methyl-5-(beta-hydroxyethyl)thiazole monophosphate (THZ-P) and 2-methyl-4-amino-5-hydroxymethyl pyrimidine pyrophosphate (HMP-PP) to form thiamine monophosphate (TMP). This is Thiamine-phosphate synthase from Clostridium beijerinckii (strain ATCC 51743 / NCIMB 8052) (Clostridium acetobutylicum).